Consider the following 831-residue polypeptide: Histone acetyltransferase SAS3 (831 aa).

One can recognise an MYST-type HAT domain in the interval 267-573; the sequence is VWFSQIEYIV…VKYDKLLWEP (307 aa). The C2HC MYST-type zinc-finger motif lies at 300–325; the sequence is VFICEFCLKYMTSRYTFYRHQLKCLT. K367 carries the post-translational modification N6-acetyllysine; by autocatalysis. Acetyl-CoA is bound by residues 419 to 421 and 426 to 432; these read ILT and QRKGYGQ. The active-site Proton donor/acceptor is the E452. S456 serves as a coordination point for acetyl-CoA. Disordered regions lie at residues 614–639 and 719–813; these read ENYNNSRAHNKRRRRRRRSSEHKTSK and PLGN…SHIR. Residues 621-633 show a composition bias toward basic residues; it reads AHNKRRRRRRRSS. Acidic residues-rich tracts occupy residues 736–746 and 755–794; these read EQDEVENDVDT and KEDEDEDEDFTLDDDIEDEQISEENDEEEDTYEEDSDDDE. Positions 795-812 are enriched in basic and acidic residues; the sequence is DGKRKGQEQDENDIESHI.

The protein belongs to the MYST (SAS/MOZ) family. As to quaternary structure, component of the NuA3 histone acetyltransferase (HAT) complex. The NuA3 HAT complex has 2 functionally distinct forms that participate in transcription. The NuA3a HAT complex is composed of at least NTO1, SAS3, TAF14, YNG1 and EAF6. The NuA3b HAT complex contains an additional subunit, PDP3. SAS3 interacts with CDC68/SPT16. Post-translationally, autoacetylation at Lys-367 is required for proper function.

It localises to the nucleus. The catalysed reaction is L-lysyl-[protein] + acetyl-CoA = N(6)-acetyl-L-lysyl-[protein] + CoA + H(+). Catalytic component of the NuA3 histone acetyltransferase complex, that acetylates H3K14. The NuA3 HAT complex has 2 functionally distinct forms. NuA3a binds H3K4me3, through the PHD finger of YNG1, and acetylates H3K14 at the promoter region of actively transcribed genes to promote transcription initiation. NuA3b binds H3K36me3 at the coding regions of actively transcribed genes, through the PWWP domain of PDP3, and coordinates transcription elongation. In vitro, SAS3 acetylates free histones H3 and H4. It is involved in silencing the HMR locus. The polypeptide is Histone acetyltransferase SAS3 (Saccharomyces cerevisiae (strain ATCC 204508 / S288c) (Baker's yeast)).